The chain runs to 1305 residues: Serine protease EspC (1305 aa).

The first 53 residues, 1–53, serve as a signal peptide directing secretion; sequence MNKIYALKYCHATGGLIAVSELASRVMKKAARGSLLALFNLSLYGAFLSASQA. The region spanning 55–297 is the Peptidase S6 domain; sequence QLNIDNVWAR…SILNQYDENT (243 aa). Active-site charge relay system residues include His-125, Asp-153, and Ser-256. Residues 1039 to 1305 form the Autotransporter domain; that stretch reads DTQGDAGVWA…AINANFRYSF (267 aa).

Post-translationally, cleaved to release the mature protein from the outer membrane.

The protein localises to the periplasm. It localises to the secreted. It is found in the cell surface. Its subcellular location is the cell outer membrane. With respect to regulation, inhibition of cytotoxic activity by phenylmethylsulfonyl fluoride. Functionally, serine protease with enterotoxic and cytotoxic activities. Cleaves fodrin, but does not cause its redistribution within epithelial cells. The exact role of EspC in EPEC pathogenesis is still unknown. The sequence is that of Serine protease EspC (espC) from Escherichia coli O127:H6 (strain E2348/69 / EPEC).